The following is a 216-amino-acid chain: Superoxide dismutase [Cu-Zn], chloroplastic (216 aa).

Residues 1–62 constitute a chloroplast transit peptide; sequence MACHSALAAV…ASPRSMVVVA (62 aa). Cu cation is bound by residues histidine 108, histidine 110, and histidine 125. Cysteines 119 and 208 form a disulfide. Zn(2+) contacts are provided by histidine 125, histidine 133, histidine 142, and aspartate 145. Position 182 (histidine 182) interacts with Cu cation.

The protein belongs to the Cu-Zn superoxide dismutase family. Homotetramer. Cu cation serves as cofactor. It depends on Zn(2+) as a cofactor.

The protein localises to the plastid. It localises to the chloroplast. The enzyme catalyses 2 superoxide + 2 H(+) = H2O2 + O2. Its function is as follows. Destroys radicals which are normally produced within the cells and which are toxic to biological systems. This is Superoxide dismutase [Cu-Zn], chloroplastic (SODCP) from Zantedeschia aethiopica (White calla lily).